Reading from the N-terminus, the 258-residue chain is Type III pantothenate kinase (258 aa).

Residue 6–13 (DIGNTNTV) participates in ATP binding. Residues Tyr-100 and 107–110 (GADR) each bind substrate. Residue Asp-109 is the Proton acceptor of the active site. Asp-129 contributes to the K(+) binding site. Position 132 (Thr-132) interacts with ATP. Thr-185 serves as a coordination point for substrate.

Belongs to the type III pantothenate kinase family. In terms of assembly, homodimer. It depends on NH4(+) as a cofactor. K(+) is required as a cofactor.

The protein resides in the cytoplasm. The enzyme catalyses (R)-pantothenate + ATP = (R)-4'-phosphopantothenate + ADP + H(+). Its pathway is cofactor biosynthesis; coenzyme A biosynthesis; CoA from (R)-pantothenate: step 1/5. Catalyzes the phosphorylation of pantothenate (Pan), the first step in CoA biosynthesis. This Syntrophobacter fumaroxidans (strain DSM 10017 / MPOB) protein is Type III pantothenate kinase.